We begin with the raw amino-acid sequence, 256 residues long: Alcohol dehydrogenase (256 aa).

An NAD(+)-binding site is contributed by 12–35 (FVAGLGGIGLDTSKELVKRDLKNL). Serine 140 serves as a coordination point for substrate. Residue tyrosine 153 is the Proton acceptor of the active site.

It belongs to the short-chain dehydrogenases/reductases (SDR) family. Homodimer.

The catalysed reaction is a primary alcohol + NAD(+) = an aldehyde + NADH + H(+). It carries out the reaction a secondary alcohol + NAD(+) = a ketone + NADH + H(+). The sequence is that of Alcohol dehydrogenase (Adh) from Drosophila erecta (Fruit fly).